Here is a 182-residue protein sequence, read N- to C-terminus: Putative lipoprotein LpqE (182 aa).

The N-terminal stretch at 1–29 (MNRCNIRLRLAGMTTWVASIALLAAALSG) is a signal peptide. Cys30 carries N-palmitoyl cysteine lipidation. Cys30 carries S-diacylglycerol cysteine lipidation.

The protein localises to the cell membrane. In Mycobacterium bovis (strain ATCC BAA-935 / AF2122/97), this protein is Putative lipoprotein LpqE (lpqE).